The sequence spans 267 residues: Cilia- and flagella-associated protein 300 (267 aa).

The protein belongs to the CFAP300 family.

The protein resides in the cytoplasm. Its subcellular location is the cytoskeleton. It is found in the cilium axoneme. Functionally, cilium- and flagellum-specific protein that plays a role in axonemal structure organization and motility. May play a role in outer and inner dynein arm assembly. This is Cilia- and flagella-associated protein 300 from Xenopus tropicalis (Western clawed frog).